Consider the following 1162-residue polypeptide: Protein OBERON 4 (1162 aa).

Composition is skewed to basic and acidic residues over residues 1-19, 61-77, 90-99, and 118-134; these read MKRL…KNVD, NRDL…HRSE, FRSERERPNR, and VDDR…DRSL. Disordered stretches follow at residues 1–235, 251–307, 321–346, and 441–485; these read MKRL…PSCS, IGKS…VSQN, DHRD…DKDE, and SKTE…QSGV. Residues 135-146 are compositionally biased toward polar residues; that stretch reads KSPSWSRDSPNE. The span at 148–157 shows a compositional bias: basic and acidic residues; it reads SKFKPLDSRN. Residues 163–182 are compositionally biased toward polar residues; the sequence is KSLASPTWSKDSGSEQSKSV. Acidic residues predominate over residues 203-213; that stretch reads EMEEGELEPEP. Basic and acidic residues-rich tracts occupy residues 225 to 235, 263 to 300, 336 to 346, and 441 to 457; these read TKHDCKLPSCS, SNRE…HATE, DTVDEKGDKDE, and SKTE…KDDN. The segment at 835–899 adopts a PHD-type zinc-finger fold; sequence ACMCLVCSNF…QFHCVACNHP (65 aa). A coiled-coil region spans residues 1065–1161; it reads MKQAEAEMFQ…KMEMTKQSLA (97 aa).

Self-interacts. Interacts with OBE1 and OBE2. Interacts with OBE3.

It is found in the nucleus. Functionally, probable transcription factor that functions redundantly with OBE3 in specification of the hypophysis and establishment of the embryonic root. Involved in the activation of ARF5/MP-dependent gene expression during embryonic root meristem initiation. Involved in shoot meristem homeostasis. In Arabidopsis thaliana (Mouse-ear cress), this protein is Protein OBERON 4.